The sequence spans 429 residues: Na(+)/H(+) antiporter NhaA 1 (429 aa).

12 consecutive transmembrane segments (helical) span residues 32 to 52 (ISGGLLLAATVLALGWANSPW), 73 to 93 (LSVQQWAADGLLAIFFFVAGL), 111 to 131 (VVPVAAAAGGVAVPAVLYSLL), 140 to 160 (GWAIPTATDIAFALSVLAVVG), 170 to 190 (FLLTLAVVDDLLAIVIIAVAY), 193 to 213 (ELSVVPLVAAVVPLAAFTLLV), 219 to 239 (AWWLLLPLAVLTWALVHASGV), 243 to 263 (VAGVLLAFAVPVLRSEGAGGP), 284 to 304 (VAVPVFAFCSAGVTVGGLGGL), 316 to 336 (VVVGLVVGKAIGIFTTTWLVA), 349 to 369 (WVDVAGLALLGGVGFTVSLLI), and 383 to 403 (HVKVGVLTASVTAALLATVVL).

This sequence belongs to the NhaA Na(+)/H(+) (TC 2.A.33) antiporter family.

The protein resides in the cell membrane. The catalysed reaction is Na(+)(in) + 2 H(+)(out) = Na(+)(out) + 2 H(+)(in). Functionally, na(+)/H(+) antiporter that extrudes sodium in exchange for external protons. The chain is Na(+)/H(+) antiporter NhaA 1 from Frankia alni (strain DSM 45986 / CECT 9034 / ACN14a).